A 186-amino-acid chain; its full sequence is Temperature-induced lipocalin-1 (186 aa).

An HPR (Hydrophobic proline-rich) motif is present at residues 90-97; it reads PPFLPIIP. Positions 154-174 are disordered; sequence KLHKTPQSDTPPESNTAPEDS. Over residues 158–171 the composition is skewed to polar residues; sequence TPQSDTPPESNTAP.

Belongs to the calycin superfamily. Lipocalin family. In terms of tissue distribution, expressed ubiquitously at similar levels, except in dry seeds (at protein level). Present in seeds.

It localises to the cell membrane. It is found in the cytoplasm. The protein localises to the plastid. Its subcellular location is the chloroplast membrane. Functionally, involved in basal (BT) and acquired thermotolerance (AT), probably by preventing plasma membrane lipids peroxidation induced by severe heat-shock (HS). Lipocalin that confers protection against oxidative stress caused by heat, freezing, paraquat and light. Confers resistance to high salt (NaCl) levels, probably by protecting chloroplasts from ion toxicity via ion homeostasis maintenance. Required for seed longevity by ensuring polyunsaturated lipids integrity. In Arabidopsis thaliana (Mouse-ear cress), this protein is Temperature-induced lipocalin-1.